Reading from the N-terminus, the 724-residue chain is Threonine--tRNA ligase 2, cytoplasmic (724 aa).

Ala2 is subject to N-acetylalanine. Positions 44–72 (QAEGPCLTREVAQLRAENRELRHCLYRLR) form a coiled coil. Residues 90–112 (RAEAGRAAAGAQPPPSQSLEEDV) are disordered. One can recognise a TGS domain in the interval 155 to 220 (DSSNVITVRV…EGDATVELLT (66 aa)). The residue at position 451 (Ser451) is a Phosphoserine.

This sequence belongs to the class-II aminoacyl-tRNA synthetase family. In terms of assembly, may be a component of the multisynthetase complex (MSC), a large multi-subunit complex which contains at least eight different aminoacyl-tRNA synthetases plus three auxillary subunits AIMP1, AIMP2 and EEF1E1. Interacts with the MSC components EPRS1, AIMP1, AIMP2 and KARS1.

The protein localises to the cytoplasm. The protein resides in the nucleus. The catalysed reaction is tRNA(Thr) + L-threonine + ATP = L-threonyl-tRNA(Thr) + AMP + diphosphate + H(+). In terms of biological role, catalyzes the attachment of threonine to tRNA(Thr) in a two-step reaction: threonine is first activated by ATP to form Thr-AMP and then transferred to the acceptor end of tRNA(Thr). Also edits incorrectly charged tRNA(Thr) via its editing domain, at the post-transfer stage. This chain is Threonine--tRNA ligase 2, cytoplasmic (TARS3), found in Bos taurus (Bovine).